A 140-amino-acid chain; its full sequence is Large ribosomal subunit protein uL11 (140 aa).

It belongs to the universal ribosomal protein uL11 family. In terms of assembly, part of the ribosomal stalk of the 50S ribosomal subunit. Interacts with L10 and the large rRNA to form the base of the stalk. L10 forms an elongated spine to which L12 dimers bind in a sequential fashion forming a multimeric L10(L12)X complex. Post-translationally, one or more lysine residues are methylated.

In terms of biological role, forms part of the ribosomal stalk which helps the ribosome interact with GTP-bound translation factors. The protein is Large ribosomal subunit protein uL11 of Syntrophobacter fumaroxidans (strain DSM 10017 / MPOB).